The sequence spans 356 residues: NADH-quinone oxidoreductase subunit H (356 aa).

Transmembrane regions (helical) follow at residues 18–38 (IVMV…IAYI), 87–107 (GVFL…WAVI), 120–140 (VGIL…IMGG), 166–186 (IGFV…SAIV), 202–222 (WLTF…VFYV), 257–277 (LFML…AILF), 292–312 (WVPG…LIAM), and 333–353 (FLPL…FAGI).

This sequence belongs to the complex I subunit 1 family. NDH-1 is composed of 14 different subunits. Subunits NuoA, H, J, K, L, M, N constitute the membrane sector of the complex.

The protein localises to the cell inner membrane. It catalyses the reaction a quinone + NADH + 5 H(+)(in) = a quinol + NAD(+) + 4 H(+)(out). Functionally, NDH-1 shuttles electrons from NADH, via FMN and iron-sulfur (Fe-S) centers, to quinones in the respiratory chain. The immediate electron acceptor for the enzyme in this species is believed to be ubiquinone. Couples the redox reaction to proton translocation (for every two electrons transferred, four hydrogen ions are translocated across the cytoplasmic membrane), and thus conserves the redox energy in a proton gradient. This subunit may bind ubiquinone. This chain is NADH-quinone oxidoreductase subunit H, found in Nitrobacter winogradskyi (strain ATCC 25391 / DSM 10237 / CIP 104748 / NCIMB 11846 / Nb-255).